A 179-amino-acid polypeptide reads, in one-letter code: Putative DUP240 protein DFP1 (179 aa).

2 helical membrane-spanning segments follow: residues 4-24 and 26-46; these read FLLF…SGVL and PAMV…IWSF.

The protein belongs to the DUP/COS family.

Its subcellular location is the membrane. This is Putative DUP240 protein DFP1 from Saccharomyces cerevisiae (strain ATCC 204508 / S288c) (Baker's yeast).